The sequence spans 633 residues: DNA mismatch repair protein MutL (633 aa).

Disordered regions lie at residues 337 to 364 and 383 to 405; these read RPDD…GEFG and VGWS…TRPE. The segment covering 385–396 has biased composition (gly residues); sequence WSGGSSASGGSS.

The protein belongs to the DNA mismatch repair MutL/HexB family.

Its function is as follows. This protein is involved in the repair of mismatches in DNA. It is required for dam-dependent methyl-directed DNA mismatch repair. May act as a 'molecular matchmaker', a protein that promotes the formation of a stable complex between two or more DNA-binding proteins in an ATP-dependent manner without itself being part of a final effector complex. In Pseudomonas aeruginosa (strain UCBPP-PA14), this protein is DNA mismatch repair protein MutL.